We begin with the raw amino-acid sequence, 113 residues long: Putative membrane protein insertion efficiency factor (113 aa).

The protein belongs to the UPF0161 family.

It is found in the cell inner membrane. In terms of biological role, could be involved in insertion of integral membrane proteins into the membrane. The sequence is that of Putative membrane protein insertion efficiency factor from Campylobacter jejuni subsp. doylei (strain ATCC BAA-1458 / RM4099 / 269.97).